A 102-amino-acid chain; its full sequence is Large ribosomal subunit protein uL24 (102 aa).

Belongs to the universal ribosomal protein uL24 family. As to quaternary structure, part of the 50S ribosomal subunit.

Functionally, one of two assembly initiator proteins, it binds directly to the 5'-end of the 23S rRNA, where it nucleates assembly of the 50S subunit. Its function is as follows. One of the proteins that surrounds the polypeptide exit tunnel on the outside of the subunit. The protein is Large ribosomal subunit protein uL24 of Limosilactobacillus reuteri (strain DSM 20016) (Lactobacillus reuteri).